The chain runs to 229 residues: Ribose-5-phosphate isomerase A (229 aa).

Residues 28–31 (TGST), 85–88 (DGAD), and 98–101 (KGRG) each bind substrate. E107 serves as the catalytic Proton acceptor. K125 is a binding site for substrate.

It belongs to the ribose 5-phosphate isomerase family. Homodimer.

The catalysed reaction is aldehydo-D-ribose 5-phosphate = D-ribulose 5-phosphate. Its pathway is carbohydrate degradation; pentose phosphate pathway; D-ribose 5-phosphate from D-ribulose 5-phosphate (non-oxidative stage): step 1/1. In terms of biological role, catalyzes the reversible conversion of ribose-5-phosphate to ribulose 5-phosphate. The protein is Ribose-5-phosphate isomerase A of Pyrococcus abyssi (strain GE5 / Orsay).